Consider the following 285-residue polypeptide: Taffazin (285 aa).

Topologically, residues 1 to 23 (MDSNNSNNNNKNLKQICDIPKPQ) are mitochondrial intermembrane. An intramembrane segment occupies 24–42 (FLSKGVFTLVGVLCKFWIS). Over 43 to 285 (MNTVTTSGID…GRFSHPTIKD (243 aa)) the chain is Mitochondrial intermembrane. Residues 74-79 (HSSNLD) carry the HXXXXD motif motif.

The protein belongs to the taffazin family.

Its subcellular location is the mitochondrion outer membrane. It is found in the mitochondrion inner membrane. The enzyme catalyses a 1-acyl-sn-glycero-3-phosphate + a 1,2-diacyl-sn-glycero-3-phospho-(1'-sn-glycerol) = 1-acyl-sn-glycero-3-phospho-(1'-sn-glycerol) + a 1,2-diacyl-sn-glycero-3-phosphate. The catalysed reaction is 1-hexadecanoyl-2-(9Z,12Z-octadecadienoyl)-sn-glycero-3-phospho-(1'-sn-glycerol) + 1-(9Z-octadecenoyl)-sn-glycero-3-phosphate = 1-(9Z)-octadecenoyl-2-(9Z,12Z)-octadecadienoyl-sn-glycero-3-phosphate + 1-hexadecanoyl-sn-glycero-3-phospho-(1'-sn-glycerol). It carries out the reaction 1'-[1,2-diacyl-sn-glycero-3-phospho],3'-[1-acyl-sn-glycero-3-phospho]-glycerol + a 1,2-diacyl-sn-glycero-3-phosphocholine = a cardiolipin + a 1-acyl-sn-glycero-3-phosphocholine. It catalyses the reaction 1-hexadecanoyl-2-(9Z,12Z-octadecadienoyl)-sn-glycero-3-phosphocholine + 1-hexadecanoyl-sn-glycero-3-phosphocholine = 2-(9Z,12Z-octadecadienoyl)-sn-glycero-3-phosphocholine + 1,2-dihexadecanoyl-sn-glycero-3-phosphocholine. The enzyme catalyses 1,2-di-(9Z-octadecenoyl)-sn-glycero-3-phosphocholine + 1-hexadecanoyl-sn-glycero-3-phosphocholine = 1-hexadecanoyl-2-(9Z-octadecenoyl)-sn-glycero-3-phosphocholine + 1-(9Z-octadecenoyl)-sn-glycero-3-phosphocholine. Its pathway is phospholipid metabolism. In terms of biological role, acyltransferase required to remodel newly synthesized phospholipid cardiolipin (1',3'-bis-[1,2-diacyl-sn-glycero-3-phospho]-glycerol or CL), a key component of the mitochondrial inner membrane, with tissue specific acyl chains necessary for adequate mitochondrial function. Its role in cellular physiology is to improve mitochondrial performance. CL is critical for the coassembly of lipids and proteins in mitochondrial membranes, for instance, remodeling of the acyl groups of CL in the mitochondrial inner membrane affects the assembly and stability of respiratory chain complex IV and its supercomplex forms. Catalyzes the transacylation between phospholipids and lysophospholipids, with the highest rate being between phosphatidylcholine (1,2-diacyl-sn-glycero-3-phosphocholine or PC) and CL. Catalyzes both 1-acyl-sn-glycero-3-phosphocholine (lysophosphatidylcholine or LPC) reacylation and PC-CL transacylation, that means, it exchanges acyl groups between CL and PC by a combination of forward and reverse transacylations. Also catalyzes transacylations between other phospholipids such as phosphatidylethanolamine (1,2-diacyl-sn-glycero-3-phosphoethanolamine or PE) and CL, between PC and PE, and between PC and phosphatidate (1,2-diacyl-sn-glycero-3-phosphate or PA), although at lower rate. Not regiospecific, it transfers acyl groups into any of the sn-1 and sn-2 positions of the monolysocardiolipin (MLCL), which is an important prerequisite for uniformity and symmetry in CL acyl distribution. Cannot transacylate dilysocardiolipin (DLCL), thus, the role of MLCL is limited to that of an acyl acceptor. CoA-independent, it can reshuffle molecular species within a single phospholipid class. Redistributes fatty acids between MLCL, CL, and other lipids, which prolongs the half-life of CL. Its action is completely reversible, which allows for cyclic changes, such as fission and fusion or bending and flattening of the membrane. Hence, by contributing to the flexibility of the lipid composition, it plays an important role in the dynamics of mitochondria membranes. The sequence is that of Taffazin (taz) from Dictyostelium discoideum (Social amoeba).